The following is a 330-amino-acid chain: ADP-L-glycero-D-manno-heptose-6-epimerase (330 aa).

Residues 11 to 12 (FI), 32 to 33 (DN), Lys39, Lys54, 75 to 79 (EGACS), and Asn92 contribute to the NADP(+) site. The active-site Proton acceptor is Tyr139. Residue Lys143 participates in NADP(+) binding. Asn168 is a binding site for substrate. Val169 and Lys177 together coordinate NADP(+). Residue Lys177 is the Proton acceptor of the active site. Substrate is bound by residues Arg179, His186, 200-203 (FGEY), Arg213, and Tyr292.

It belongs to the NAD(P)-dependent epimerase/dehydratase family. HldD subfamily. In terms of assembly, homopentamer. NADP(+) serves as cofactor.

The enzyme catalyses ADP-D-glycero-beta-D-manno-heptose = ADP-L-glycero-beta-D-manno-heptose. It functions in the pathway nucleotide-sugar biosynthesis; ADP-L-glycero-beta-D-manno-heptose biosynthesis; ADP-L-glycero-beta-D-manno-heptose from D-glycero-beta-D-manno-heptose 7-phosphate: step 4/4. Functionally, catalyzes the interconversion between ADP-D-glycero-beta-D-manno-heptose and ADP-L-glycero-beta-D-manno-heptose via an epimerization at carbon 6 of the heptose. This is ADP-L-glycero-D-manno-heptose-6-epimerase from Paraburkholderia xenovorans (strain LB400).